We begin with the raw amino-acid sequence, 409 residues long: ORC1-type DNA replication protein 1 (409 aa).

ATP is bound by residues 63-67 (TGKTA), Tyr-206, and Arg-218.

The protein belongs to the CDC6/cdc18 family.

Involved in regulation of DNA replication. In Archaeoglobus fulgidus (strain ATCC 49558 / DSM 4304 / JCM 9628 / NBRC 100126 / VC-16), this protein is ORC1-type DNA replication protein 1 (cdc6-1).